The chain runs to 376 residues: Anhydro-N-acetylmuramic acid kinase (376 aa).

Residue 11–18 (GTSMDGVD) coordinates ATP.

It belongs to the anhydro-N-acetylmuramic acid kinase family.

The enzyme catalyses 1,6-anhydro-N-acetyl-beta-muramate + ATP + H2O = N-acetyl-D-muramate 6-phosphate + ADP + H(+). The protein operates within amino-sugar metabolism; 1,6-anhydro-N-acetylmuramate degradation. It participates in cell wall biogenesis; peptidoglycan recycling. Its function is as follows. Catalyzes the specific phosphorylation of 1,6-anhydro-N-acetylmuramic acid (anhMurNAc) with the simultaneous cleavage of the 1,6-anhydro ring, generating MurNAc-6-P. Is required for the utilization of anhMurNAc either imported from the medium or derived from its own cell wall murein, and thus plays a role in cell wall recycling. The polypeptide is Anhydro-N-acetylmuramic acid kinase (Acinetobacter baylyi (strain ATCC 33305 / BD413 / ADP1)).